Here is a 176-residue protein sequence, read N- to C-terminus: Probable DNA-directed RNA polymerase subunit delta (176 aa).

Residues 14–81 (CSMIEVVHSV…GENRWGLRSW (68 aa)) enclose the HTH HARE-type domain. Positions 90–176 (EILPQPKPKK…ETEEEEEEEL (87 aa)) are disordered. Residues 106-176 (DGFDDYIEED…ETEEEEEEEL (71 aa)) show a composition bias toward acidic residues.

Belongs to the RpoE family. As to quaternary structure, RNAP is composed of a core of 2 alpha, a beta and a beta' subunits. The core is associated with a delta subunit and one of several sigma factors.

Participates in both the initiation and recycling phases of transcription. In the presence of the delta subunit, RNAP displays an increased specificity of transcription, a decreased affinity for nucleic acids, and an increased efficiency of RNA synthesis because of enhanced recycling. This Bacillus thuringiensis subsp. konkukian (strain 97-27) protein is Probable DNA-directed RNA polymerase subunit delta.